Consider the following 267-residue polypeptide: Tryptophan synthase alpha chain (267 aa).

Catalysis depends on proton acceptor residues glutamate 49 and aspartate 60.

The protein belongs to the TrpA family. In terms of assembly, tetramer of two alpha and two beta chains.

It catalyses the reaction (1S,2R)-1-C-(indol-3-yl)glycerol 3-phosphate + L-serine = D-glyceraldehyde 3-phosphate + L-tryptophan + H2O. It functions in the pathway amino-acid biosynthesis; L-tryptophan biosynthesis; L-tryptophan from chorismate: step 5/5. Its function is as follows. The alpha subunit is responsible for the aldol cleavage of indoleglycerol phosphate to indole and glyceraldehyde 3-phosphate. This Geotalea uraniireducens (strain Rf4) (Geobacter uraniireducens) protein is Tryptophan synthase alpha chain.